A 453-amino-acid chain; its full sequence is DNA repair protein RadA (453 aa).

The segment at 11 to 28 (CNQCGATAPKWLGQCPGC) adopts a C4-type zinc-finger fold. 93–100 (GDPGIGKS) contacts ATP. The RadA KNRFG motif signature appears at 250–254 (KNRFG). The tract at residues 349-453 (DVFLSITGGL…TIKDAIRLLL (105 aa)) is lon-protease-like.

It belongs to the RecA family. RadA subfamily.

Its function is as follows. DNA-dependent ATPase involved in processing of recombination intermediates, plays a role in repairing DNA breaks. Stimulates the branch migration of RecA-mediated strand transfer reactions, allowing the 3' invading strand to extend heteroduplex DNA faster. Binds ssDNA in the presence of ADP but not other nucleotides, has ATPase activity that is stimulated by ssDNA and various branched DNA structures, but inhibited by SSB. Does not have RecA's homology-searching function. The sequence is that of DNA repair protein RadA from Chlamydia pneumoniae (Chlamydophila pneumoniae).